A 74-amino-acid polypeptide reads, in one-letter code: Cell division protein ZapB (74 aa).

The stretch at 2–74 (TLDLLEQLES…LVGKIEETES (73 aa)) forms a coiled coil.

It belongs to the ZapB family. As to quaternary structure, homodimer. The ends of the coiled-coil dimer bind to each other, forming polymers. Interacts with FtsZ.

The protein resides in the cytoplasm. In terms of biological role, non-essential, abundant cell division factor that is required for proper Z-ring formation. It is recruited early to the divisome by direct interaction with FtsZ, stimulating Z-ring assembly and thereby promoting cell division earlier in the cell cycle. Its recruitment to the Z-ring requires functional FtsA or ZipA. This chain is Cell division protein ZapB, found in Psychromonas ingrahamii (strain DSM 17664 / CCUG 51855 / 37).